The primary structure comprises 188 residues: Large ribosomal subunit protein bL9 (188 aa).

Over residues Arg149–Pro170 the composition is skewed to basic and acidic residues. Positions Arg149–Ala188 are disordered.

It belongs to the bacterial ribosomal protein bL9 family.

Binds to the 23S rRNA. The chain is Large ribosomal subunit protein bL9 from Gluconacetobacter diazotrophicus (strain ATCC 49037 / DSM 5601 / CCUG 37298 / CIP 103539 / LMG 7603 / PAl5).